The primary structure comprises 62 residues: MTIAFQLAVFALIATSSILLISVPVVFASPDGWLGNKNVVFSGTSLWITLVFLVGILNSLIS.

Transmembrane regions (helical) follow at residues 8 to 28 (AVFA…VVFA) and 41 to 61 (FSGT…NSLI).

The protein belongs to the PsbZ family. As to quaternary structure, PSII is composed of 1 copy each of membrane proteins PsbA, PsbB, PsbC, PsbD, PsbE, PsbF, PsbH, PsbI, PsbJ, PsbK, PsbL, PsbM, PsbT, PsbY, PsbZ, Psb30/Ycf12, at least 3 peripheral proteins of the oxygen-evolving complex and a large number of cofactors. It forms dimeric complexes.

It localises to the plastid. It is found in the chloroplast thylakoid membrane. May control the interaction of photosystem II (PSII) cores with the light-harvesting antenna, regulates electron flow through the 2 photosystem reaction centers. PSII is a light-driven water plastoquinone oxidoreductase, using light energy to abstract electrons from H(2)O, generating a proton gradient subsequently used for ATP formation. This Morus indica (Mulberry) protein is Photosystem II reaction center protein Z.